A 105-amino-acid polypeptide reads, in one-letter code: 5-hydroxymethyl-dUMP N-hydrolase (105 aa).

5-hydroxymethyl-dUMP-binding residues include Gly6, Ile8, Ser42, Gly44, Glu48, and Ser72.

The protein belongs to the 2'-deoxynucleoside 5'-phosphate N-hydrolase 1 family. In terms of assembly, monomer and homodimer.

Its subcellular location is the cytoplasm. The protein localises to the nucleus. The catalysed reaction is 5-hydroxymethyl-dUMP + H2O = 5-hydroxymethyluracil + 2-deoxy-D-ribose 5-phosphate. In terms of biological role, part of a nucleotide salvage pathway that eliminates epigenetically modified 5-hydroxymethyl-dCMP (hmdCMP) in a two-step process entailing deamination to cytotoxic 5-hydroxymethyl-dUMP (hmdUMP), followed by its hydrolysis into 5-hydroxymethyluracil (hmU) and 2-deoxy-D-ribose 5-phosphate (deoxyribosephosphate). Catalyzes the second step in that pathway, the hydrolysis of the N-glycosidic bond in hmdUMP, degrading this cytotoxic nucleotide to avoid its genomic integration. This Branchiostoma floridae (Florida lancelet) protein is 5-hydroxymethyl-dUMP N-hydrolase.